The primary structure comprises 162 residues: Peroxiredoxin-2 (162 aa).

The region spanning 4–162 (IAVGDVLPDG…SSADDILKDL (159 aa)) is the Thioredoxin domain. The active-site Cysteine sulfenic acid (-SOH) intermediate is the cysteine 51.

It belongs to the peroxiredoxin family. Prx5 subfamily. Monomer. Homodimer. Glutathionylation of C(P) causes the dimer to dissociate. Subsequent reduction of the mixed disulfide bond leads again to dimerization.

It carries out the reaction [glutaredoxin]-dithiol + a hydroperoxide = [glutaredoxin]-disulfide + an alcohol + H2O. Functionally, thiol-specific peroxidase that catalyzes the reduction of hydrogen peroxide and organic hydroperoxides to water and alcohols, respectively. Can reduce H(2)O(2) and short chain organic, fatty acid, and phospholipid hydroperoxides. Plays a role in cell protection against oxidative stress by detoxifying peroxides. This is Peroxiredoxin-2 from Populus trichocarpa (Western balsam poplar).